The chain runs to 674 residues: UvrABC system protein C (674 aa).

The region spanning 64 to 142 (NGPGVYRMLN…IKRLRPRFNV (79 aa)) is the GIY-YIG domain. The UVR domain occupies 252 to 287 (QAVKATIASAMAEASENLDFERAALYRDRLAALSHV).

This sequence belongs to the UvrC family. As to quaternary structure, interacts with UvrB in an incision complex.

The protein resides in the cytoplasm. Functionally, the UvrABC repair system catalyzes the recognition and processing of DNA lesions. UvrC both incises the 5' and 3' sides of the lesion. The N-terminal half is responsible for the 3' incision and the C-terminal half is responsible for the 5' incision. This Rhizobium meliloti (strain 1021) (Ensifer meliloti) protein is UvrABC system protein C.